The sequence spans 259 residues: MILVIDVGNTNCTVGVYEKQKLLKHWRMTTDRHRTSDELGMTVLNFFSYANLTPSDIQGIIISSVVPPIMHAMETMCVRYFNIRPLIVGPGIKTGLNLKVDNPREIGSDRIVNAVAASEEYGTPVIVVDFGTATTFCYIDESGVYQGGAIAPGIMISTEALYNRAAKLPRVDIAESNQIIGKSTVASMQAGIFYGFVGQCEGIIAEIKKQSNASPVVVATGGLARMITEKSSAVDILDPFLTLKGLELLYRRNKPTTEK.

Residue 6–13 (DVGNTNCT) participates in ATP binding. 107 to 110 (GSDR) is a substrate binding site. The active-site Proton acceptor is Asp109. Asp129 is a binding site for K(+). Residue Thr132 participates in ATP binding. Position 184 (Thr184) interacts with substrate.

This sequence belongs to the type III pantothenate kinase family. Homodimer. NH4(+) is required as a cofactor. Requires K(+) as cofactor.

The protein localises to the cytoplasm. The catalysed reaction is (R)-pantothenate + ATP = (R)-4'-phosphopantothenate + ADP + H(+). The protein operates within cofactor biosynthesis; coenzyme A biosynthesis; CoA from (R)-pantothenate: step 1/5. Its function is as follows. Catalyzes the phosphorylation of pantothenate (Pan), the first step in CoA biosynthesis. The chain is Type III pantothenate kinase from Listeria monocytogenes serotype 4b (strain CLIP80459).